Consider the following 166-residue polypeptide: ATP synthase subunit b 1 (166 aa).

The helical transmembrane segment at 7-29 (FWTALAFVLFFVIFGRKLWVAIT) threads the bilayer.

This sequence belongs to the ATPase B chain family. F-type ATPases have 2 components, F(1) - the catalytic core - and F(0) - the membrane proton channel. F(1) has five subunits: alpha(3), beta(3), gamma(1), delta(1), epsilon(1). F(0) has three main subunits: a(1), b(2) and c(10-14). The alpha and beta chains form an alternating ring which encloses part of the gamma chain. F(1) is attached to F(0) by a central stalk formed by the gamma and epsilon chains, while a peripheral stalk is formed by the delta and b chains.

Its subcellular location is the cell inner membrane. Its function is as follows. F(1)F(0) ATP synthase produces ATP from ADP in the presence of a proton or sodium gradient. F-type ATPases consist of two structural domains, F(1) containing the extramembraneous catalytic core and F(0) containing the membrane proton channel, linked together by a central stalk and a peripheral stalk. During catalysis, ATP synthesis in the catalytic domain of F(1) is coupled via a rotary mechanism of the central stalk subunits to proton translocation. In terms of biological role, component of the F(0) channel, it forms part of the peripheral stalk, linking F(1) to F(0). The sequence is that of ATP synthase subunit b 1 from Gluconobacter oxydans (strain 621H) (Gluconobacter suboxydans).